The primary structure comprises 98 residues: Sec-independent protein translocase protein TatA (98 aa).

Residues 1 to 21 (MGAMSPWHWAIVALVVVILFG) traverse the membrane as a helical segment. A disordered region spans residues 43 to 98 (VKEMQNDNSTPAPTAQSAPPPQSAPAELPVADTTTAPVTPPAPVQPQSQHTEPKSA). The span at 66-79 (APAELPVADTTTAP) shows a compositional bias: low complexity.

Belongs to the TatA/E family. The Tat system comprises two distinct complexes: a TatABC complex, containing multiple copies of TatA, TatB and TatC subunits, and a separate TatA complex, containing only TatA subunits. Substrates initially bind to the TatABC complex, which probably triggers association of the separate TatA complex to form the active translocon.

It is found in the cell membrane. Its function is as follows. Part of the twin-arginine translocation (Tat) system that transports large folded proteins containing a characteristic twin-arginine motif in their signal peptide across membranes. TatA could form the protein-conducting channel of the Tat system. This Rhodococcus erythropolis (Arthrobacter picolinophilus) protein is Sec-independent protein translocase protein TatA.